The chain runs to 475 residues: MAEAATRSVGKVTQVIGAVVDVAFEGELPAILNALETDNNGNRLVLEVAQHLGENEVRTIAMDSSEGLVRGQQVIDTGAPISVPVGDETLGRIMNVIGEPVDEAGPLNTAHKRAIHQDAPAYVEQSTEAQILVTGIKVVDLLAPYAKGGKIGLFGGAGVGKTVLIMELINNVAKAHGGYSVFAGVGERTREGNDLYHEMIESGVNKHGGGEGSKAALVYGQMNEPPGARARVALTGLTVAEHFRDQGQDVLFFVDNIFRFTQAGSEVSALLGRIPSAVGYQPTLATDMGQMQERITTTTTGSITSVQAIYVPADDLTDPAPATSFAHLDATTVLSRSIAEKGIYPAVDPLDSTSRMLDPMVVGEEHYEVARKVQSTLQRYKALQDIIAILGMDELSEEDKLAVARARKIERFLSQPFFVAEVFTGSPGKLVALEDTIKGFKGLVNGEYDNLPEAAFYMVGSMDEAIEKAKKLAAA.

Residue 155–162 (GGAGVGKT) coordinates ATP.

This sequence belongs to the ATPase alpha/beta chains family. As to quaternary structure, F-type ATPases have 2 components, CF(1) - the catalytic core - and CF(0) - the membrane proton channel. CF(1) has five subunits: alpha(3), beta(3), gamma(1), delta(1), epsilon(1). CF(0) has three main subunits: a(1), b(2) and c(9-12). The alpha and beta chains form an alternating ring which encloses part of the gamma chain. CF(1) is attached to CF(0) by a central stalk formed by the gamma and epsilon chains, while a peripheral stalk is formed by the delta and b chains.

The protein resides in the cell inner membrane. It carries out the reaction ATP + H2O + 4 H(+)(in) = ADP + phosphate + 5 H(+)(out). Produces ATP from ADP in the presence of a proton gradient across the membrane. The catalytic sites are hosted primarily by the beta subunits. This Rhizobium etli (strain ATCC 51251 / DSM 11541 / JCM 21823 / NBRC 15573 / CFN 42) protein is ATP synthase subunit beta.